Here is a 688-residue protein sequence, read N- to C-terminus: SRSF protein kinase 2 (688 aa).

A disordered region spans residues 1 to 65 (MSVNSEKSSS…EQEDPADYCK (65 aa)). Positions 22–43 (LVPPPPPPPPPPPPPLPDPTPP) are enriched in pro residues. Residues 44-61 (EPEEEILGSDDEEQEDPA) are compositionally biased toward acidic residues. Phosphoserine is present on Ser52. The Protein kinase domain occupies 81–684 (YHVIRKLGWG…ASAGECLRHP (604 aa)). Residues 87–95 (LGWGHFSTV) and Lys110 each bind ATP. Catalysis depends on Asp214, which acts as the Proton acceptor. Disordered stretches follow at residues 239 to 277 (WQKA…KKQK), 329 to 444 (GLEE…GRHK), and 469 to 501 (SVLS…TGDL). Over residues 265–277 (SKNKKKKLKKKQK) the composition is skewed to basic residues. Position 380 is a phosphoserine (Ser380). The span at 397 to 421 (QLDDEDDDEEDCPNPEEYNLDEPNA) shows a compositional bias: acidic residues. Polar residues predominate over residues 423-433 (SDYTYSSSYEQ). The residue at position 475 (Ser475) is a Phosphoserine. Phosphothreonine is present on Thr478. Ser484, Ser486, and Ser490 each carry phosphoserine. Thr492 carries the phosphothreonine; by PKB/AKT1 modification. Ser494 and Ser497 each carry phosphoserine. Residue Ser588 is modified to Phosphoserine; by CK2.

The protein belongs to the protein kinase superfamily. CMGC Ser/Thr protein kinase family. Associates with U4/U6-U5 tri-small nuclear ribonucleoproteins (U4/U6-U5 tri-snRNPs). Interacts with PKB/AKT1 in a phosphorylation-dependent manner. The phosphorylated form (by PKB/AKT1) interacts with YWHAB and YWHAE. Interaction with YWHAB suppresses its cleavage by caspases and inhibits the release of its N-terminal pro-apoptotic fragment. Interacts with SFN. Interacts with ACIN1. Interacts with POLR2A/RNA polymerase II; the interaction occurs during the co-transcriptional formation of inappropriate R-loops. Mg(2+) is required as a cofactor. In terms of processing, phosphorylation at Thr-492 by PKB/AKT1 enhances its stimulatory activity in triggering cyclin-D1 (CCND1) expression and promoting apoptosis in neurons, which can be blocked by YWHAB. It also enhances its protein kinase activity toward ACIN1 and SRSF2, promotes its nuclear translocation and prevents its proteolytic cleavage. Post-translationally, proteolytically cleaved at Asp-139 and Asp-403 by caspase-3 during apoptotic cell death. Cleavage at Asp-139 which is the major site of cleavage, produces a small N-terminal fragment that translocates into nucleus and promotes VP16-induced apoptosis. As to expression, highly expressed in brain, moderately expressed in heart and skeletal muscle and at low levels in lung, liver, and kidney.

Its subcellular location is the cytoplasm. The protein resides in the nucleus. The protein localises to the nucleoplasm. It localises to the nucleus speckle. It is found in the chromosome. It catalyses the reaction L-seryl-[protein] + ATP = O-phospho-L-seryl-[protein] + ADP + H(+). The catalysed reaction is L-threonyl-[protein] + ATP = O-phospho-L-threonyl-[protein] + ADP + H(+). Its activity is regulated as follows. Activated by phosphorylation on Ser-52 and Ser-588. Functionally, serine/arginine-rich protein-specific kinase which specifically phosphorylates its substrates at serine residues located in regions rich in arginine/serine dipeptides, known as RS domains and is involved in the phosphorylation of SR splicing factors and the regulation of splicing. Promotes neuronal apoptosis by up-regulating cyclin-D1 (CCND1) expression. This is done by the phosphorylation of SRSF2, leading to the suppression of p53/TP53 phosphorylation thereby relieving the repressive effect of p53/TP53 on cyclin-D1 (CCND1) expression. Phosphorylates ACIN1, and redistributes it from the nuclear speckles to the nucleoplasm, resulting in cyclin A1 but not cyclin A2 up-regulation. Plays an essential role in spliceosomal B complex formation via the phosphorylation of DDX23/PRP28. Probably by phosphorylating DDX23, leads to the suppression of incorrect R-loops formed during transcription; R-loops are composed of a DNA:RNA hybrid and the associated non-template single-stranded DNA. Can mediate hepatitis B virus (HBV) core protein phosphorylation. Plays a negative role in the regulation of HBV replication through a mechanism not involving the phosphorylation of the core protein but by reducing the packaging efficiency of the pregenomic RNA (pgRNA) without affecting the formation of the viral core particles. This Homo sapiens (Human) protein is SRSF protein kinase 2.